The chain runs to 367 residues: Tetraacyldisaccharide 4'-kinase (367 aa).

Position 68–75 (Val68–Thr75) interacts with ATP.

This sequence belongs to the LpxK family.

It carries out the reaction a lipid A disaccharide + ATP = a lipid IVA + ADP + H(+). It functions in the pathway glycolipid biosynthesis; lipid IV(A) biosynthesis; lipid IV(A) from (3R)-3-hydroxytetradecanoyl-[acyl-carrier-protein] and UDP-N-acetyl-alpha-D-glucosamine: step 6/6. Transfers the gamma-phosphate of ATP to the 4'-position of a tetraacyldisaccharide 1-phosphate intermediate (termed DS-1-P) to form tetraacyldisaccharide 1,4'-bis-phosphate (lipid IVA). The protein is Tetraacyldisaccharide 4'-kinase of Chlamydia abortus (strain DSM 27085 / S26/3) (Chlamydophila abortus).